The primary structure comprises 464 residues: Soluble pyridine nucleotide transhydrogenase (464 aa).

35 to 44 (DSRRQVGGNC) provides a ligand contact to FAD.

It belongs to the class-I pyridine nucleotide-disulfide oxidoreductase family. It depends on FAD as a cofactor.

It is found in the cytoplasm. The enzyme catalyses NAD(+) + NADPH = NADH + NADP(+). Its function is as follows. Conversion of NADPH, generated by peripheral catabolic pathways, to NADH, which can enter the respiratory chain for energy generation. The chain is Soluble pyridine nucleotide transhydrogenase from Pseudomonas entomophila (strain L48).